The chain runs to 140 residues: Early nodulin-like protein 22 (140 aa).

The N-terminal stretch at M1–L28 is a signal peptide. One can recognise a Phytocyanin domain in the interval T39–A138. Residue N85 is glycosylated (N-linked (GlcNAc...) asparagine). A disulfide bridge links C92 with C126.

Belongs to the early nodulin-like (ENODL) family.

In terms of biological role, may act as a carbohydrate transporter. The protein is Early nodulin-like protein 22 of Arabidopsis thaliana (Mouse-ear cress).